The sequence spans 570 residues: Putative pyruvate decarboxylase C3G9.11c (570 aa).

D30 and H119 together coordinate pyruvate. Residues T396 and 419-421 (GSI) each bind thiamine diphosphate. D451 contributes to the Mg(2+) binding site. Residues 452 to 453 (GS) and 478 to 483 (NKGYTI) each bind thiamine diphosphate. The Mg(2+) site is built by N478 and G480. E484 is a pyruvate binding site.

Belongs to the TPP enzyme family. Homotetramer. Mg(2+) serves as cofactor. It depends on thiamine diphosphate as a cofactor.

The protein resides in the cytoplasm. The protein localises to the nucleus. The enzyme catalyses a 2-oxocarboxylate + H(+) = an aldehyde + CO2. It carries out the reaction pyruvate + H(+) = acetaldehyde + CO2. This chain is Putative pyruvate decarboxylase C3G9.11c, found in Schizosaccharomyces pombe (strain 972 / ATCC 24843) (Fission yeast).